The following is a 492-amino-acid chain: GTPase Obg (492 aa).

One can recognise an Obg domain in the interval 2 to 159; the sequence is PRFVDRVVIH…RELTLELKTV (158 aa). In terms of domain architecture, OBG-type G spans 160–340; sequence ADVGLIGFPS…LIFGLWQMIS (181 aa). Residues 166-173, 191-195, 212-215, 292-295, and 321-323 each bind GTP; these read GFPSAGKS, FTTLV, DVPG, NKID, and STV. Residues Ser173 and Thr193 each coordinate Mg(2+). The OCT domain occupies 358-438; that stretch reads PVPVDDSGFR…IGDMTFDWEP (81 aa). Residues 449 to 492 are disordered; it reads SGRGTDARLERTERVGAAERKAARRQRRTGDDAERGTTERGENT. 2 stretches are compositionally biased toward basic and acidic residues: residues 453–469 and 476–492; these read TDAR…AERK and RTGD…GENT.

This sequence belongs to the TRAFAC class OBG-HflX-like GTPase superfamily. OBG GTPase family. In terms of assembly, monomer. Mg(2+) is required as a cofactor.

It is found in the cytoplasm. Functionally, an essential GTPase which binds GTP, GDP and possibly (p)ppGpp with moderate affinity, with high nucleotide exchange rates and a fairly low GTP hydrolysis rate. Plays a role in control of the cell cycle, stress response, ribosome biogenesis and in those bacteria that undergo differentiation, in morphogenesis control. In Mycobacterium avium (strain 104), this protein is GTPase Obg.